Consider the following 497-residue polypeptide: Zinc finger CCCH domain-containing protein 22 (497 aa).

The C3H1-type zinc-finger motif lies at 136–163; sequence SESMMICKFFMQQRCRFGSSCRSSHGLD. Residues 236–281 form a disordered region; it reads AQMTDDDGEEEEEEDEQQSASDSEDSVSSDYDEGSPQGIGFLESTN. Over residues 239–268 the composition is skewed to acidic residues; sequence TDDDGEEEEEEDEQQSASDSEDSVSSDYDE. The region spanning 300 to 346 is the G-patch domain; the sequence is TRGIASKMMASMGYREGMGLGVSGQGILNPILVKVLPAKRSLDYALE. Residues 352–387 form a disordered region; the sequence is ECKSEKQKKKRSRGGKRKRGKKFAEAAKAAKQEEES. Over residues 357-372 the composition is skewed to basic residues; that stretch reads KQKKKRSRGGKRKRGK. A compositionally biased stretch (basic and acidic residues) spans 373–387; that stretch reads KFAEAAKAAKQEEES.

The polypeptide is Zinc finger CCCH domain-containing protein 22 (Arabidopsis thaliana (Mouse-ear cress)).